A 350-amino-acid polypeptide reads, in one-letter code: Protein-glutamate methylesterase/protein-glutamine glutaminase (350 aa).

Residues 5–122 (TVLCVDDSAL…REGMLAYSEL (118 aa)) form the Response regulatory domain. A 4-aspartylphosphate modification is found at Asp56. Positions 153–345 (LLSSEKLIAV…KRMLAKISSG (193 aa)) constitute a CheB-type methylesterase domain. Residues Ser165, His191, and Asp287 contribute to the active site.

The protein belongs to the CheB family. Phosphorylated by CheA. Phosphorylation of the N-terminal regulatory domain activates the methylesterase activity.

It localises to the cytoplasm. It carries out the reaction [protein]-L-glutamate 5-O-methyl ester + H2O = L-glutamyl-[protein] + methanol + H(+). The enzyme catalyses L-glutaminyl-[protein] + H2O = L-glutamyl-[protein] + NH4(+). In terms of biological role, involved in chemotaxis. Part of a chemotaxis signal transduction system that modulates chemotaxis in response to various stimuli. Catalyzes the demethylation of specific methylglutamate residues introduced into the chemoreceptors (methyl-accepting chemotaxis proteins or MCP) by CheR. Also mediates the irreversible deamidation of specific glutamine residues to glutamic acid. This Photorhabdus laumondii subsp. laumondii (strain DSM 15139 / CIP 105565 / TT01) (Photorhabdus luminescens subsp. laumondii) protein is Protein-glutamate methylesterase/protein-glutamine glutaminase.